Consider the following 612-residue polypeptide: Protein cereblon (612 aa).

Residues 1–11 (MDDEETAEIED) show a composition bias toward acidic residues. 3 disordered regions span residues 1–30 (MDDEETAEIEDVNVLVPATGGEGPVDGASA), 58–133 (MELI…NPHP), and 181–211 (QERRRSRTSEEGEASSEPPHTPPPPRSPYDV). Residues 69–81 (AADAPDAAASTGS) show a composition bias toward low complexity. A compositionally biased stretch (basic and acidic residues) spans 181–190 (QERRRSRTSE). The Lon N-terminal domain occupies 250 to 478 (HMLIFLHQHI…IIGSTLKDES (229 aa)). Positions 477–586 (ESVFYCRYCN…LAGSSVRIGK (110 aa)) constitute a CULT domain. Zn(2+)-binding residues include Cys482, Cys485, Cys551, and Cys554.

The protein belongs to the CRBN family. In terms of assembly, likely a component of a DCX (DDB1-CUL4-X-box) protein ligase complex. May interact with pic/DDB1. Post-translationally, ubiquitinated.

The protein resides in the nucleus. It participates in protein modification; protein ubiquitination. In terms of biological role, substrate recognition component of a DCX (DDB1-CUL4-X-box) E3 protein ligase complex that mediates the ubiquitination and subsequent proteasomal degradation of target proteins. Has an essential role in mediating growth by negatively regulating insulin signaling. It also has a role in maintaining presynaptic function in the neuromuscular junction synapses of third-instar larvae. This chain is Protein cereblon, found in Drosophila willistoni (Fruit fly).